Here is a 1129-residue protein sequence, read N- to C-terminus: Ubiquitin carboxyl-terminal hydrolase 7 (1129 aa).

The MATH domain maps to 29 to 169 (EGHLALDIER…DDVIRLRCRF (141 aa)). Residues 190–500 (IGLRNQGATC…SAYMLVYVRD (311 aa)) form the USP domain. Catalysis depends on Cys199, which acts as the Nucleophile. The active-site Proton acceptor is the His439.

This sequence belongs to the peptidase C19 family.

It localises to the nucleus. It catalyses the reaction Thiol-dependent hydrolysis of ester, thioester, amide, peptide and isopeptide bonds formed by the C-terminal Gly of ubiquitin (a 76-residue protein attached to proteins as an intracellular targeting signal).. In terms of biological role, hydrolase that deubiquitinates target proteins. This chain is Ubiquitin carboxyl-terminal hydrolase 7, found in Caenorhabditis briggsae.